The primary structure comprises 562 residues: Non-homologous end joining factor IFFO1 (562 aa).

The segment at 65–116 (ALRNDLGSNINVLKTLNLRFRCFLAKVHELERRNRLLEKQLQQALEEGKQGR) is LMNA binding. An IF rod domain is found at 73 to 529 (NINVLKTLNL…RLITQSGDRK (457 aa)). A coiled-coil region spans residues 85–117 (RCFLAKVHELERRNRLLEKQLQQALEEGKQGRR). Positions 154–187 (RVLGSPSRSPAGPLASSAACHTSSSTSTSTAFSS) are disordered. A compositionally biased stretch (low complexity) spans 168-187 (ASSAACHTSSSTSTSTAFSS). Residues 237–301 (EIRALYNVLA…MKVEQLKAEL (65 aa)) are a coiled coil. The segment at 364-401 (MGGRKRERKAAVEEDTSLSESDGPRQPEGAEEESTALS) is disordered. The segment at 453 to 528 (EQEDSLEKVI…RRLITQSGDR (76 aa)) is XCCR4 binding. Required for localization to the double-strand breaks (DSBs). Residues 458–504 (LEKVIKDTESLFKTREKEYQETIDQIELELATAKNDMNRHLHEYMEM) adopt a coiled-coil conformation. A disordered region spans residues 523–562 (TQSGDRKSPAFTAVPLSDPPPPPSETEDSDRDVSSDSSMR). Over residues 553–562 (RDVSSDSSMR) the composition is skewed to basic and acidic residues.

This sequence belongs to the intermediate filament family. Forms a heterotetramer with XRCC4. The interaction with XRCC4 is direct, involves LIG4-free XRCC4 and leads to relocalization of IFFO1 at the double-strand break (DSB) sites. Interacts with LMNA; the interaction forms an interior nucleoskeleton and the recruitment to DNA double-strand breaks.

The protein localises to the nucleus. It is found in the nucleoplasm. The protein resides in the nucleus inner membrane. It localises to the nucleus matrix. Functionally, nuclear matrix protein involved in the immobilization of broken DNA ends and the suppression of chromosome translocation during DNA double-strand breaks (DSBs). Interacts with the nuclear lamina component LMNA, resulting in the formation of a nucleoskeleton that will relocalize to the DSB sites in a XRCC4-dependent manner and promote the immobilization of the broken ends, thereby preventing chromosome translocation. Acts as a scaffold that allows the DNA repair protein XRCC4 and LMNA to assemble into a complex at the DSB sites. The sequence is that of Non-homologous end joining factor IFFO1 from Mus musculus (Mouse).